A 1274-amino-acid chain; its full sequence is Myosin-binding protein C, cardiac-type (1274 aa).

The residue at position 1 (Met-1) is an N-acetylmethionine. The residue at position 47 (Ser-47) is a Phosphoserine. The span at 107-141 (APAPAEATGAPGEAPAPAAELGESAPSPKGSSSAA) shows a compositional bias: low complexity. Residues 107–153 (APAPAEATGAPGEAPAPAAELGESAPSPKGSSSAALNGPTPGAPDDP) form a disordered region. An Ig-like C2-type 1 domain is found at 153 to 256 (PIGLFVMRPQ…FDCSNFNLTV (104 aa)). Positions 208, 210, 223, and 225 each coordinate Zn(2+). A phosphoserine; by PKA and PKC mark is found at Ser-275, Ser-284, and Ser-304. 2 positions are modified to phosphoserine: Ser-311 and Ser-427. Ig-like C2-type domains are found at residues 362–452 (STAF…VKEP), 453–543 (PVLI…VQEK), 544–633 (KLEV…HFME), and 645–771 (PKIH…VIDV). Residues Cys-436 and Cys-443 are joined by a disulfide bond. The residue at position 550 (Ser-550) is a Phosphoserine. A Phosphothreonine modification is found at Thr-607. 2 Fibronectin type-III domains span residues 774-870 (APAA…IGPP) and 872-967 (EPTH…VQEI). Residues 971–1065 (PRLQLPRHLR…ATLVLQVVDK (95 aa)) enclose the Ig-like C2-type 6 domain. The Fibronectin type-III 3 domain maps to 1068–1163 (PPQDLRVTDA…TKEPVFIPRP (96 aa)). The region spanning 1181-1274 (PSFTQPLVNR…ECRLEVRVPQ (94 aa)) is the Ig-like C2-type 7 domain. Arg-1241 is subject to Omega-N-methylarginine.

It belongs to the immunoglobulin superfamily. MyBP family. In terms of processing, substrate for phosphorylation by PKA and PKC. Reversible phosphorylation appears to modulate contraction. Polyubiquitinated.

Thick filament-associated protein located in the crossbridge region of vertebrate striated muscle a bands. In vitro it binds MHC, F-actin and native thin filaments, and modifies the activity of actin-activated myosin ATPase. It may modulate muscle contraction or may play a more structural role. The protein is Myosin-binding protein C, cardiac-type (MYBPC3) of Homo sapiens (Human).